The chain runs to 232 residues: Ashwin (232 aa).

Residues Ser-112, Ser-182, Ser-184, Ser-189, and Ser-193 each carry the phosphoserine modification. The tract at residues Lys-163 to Pro-232 is disordered. Residues Thr-197 and Thr-198 each carry the phosphothreonine modification. Positions Ala-206–Arg-224 are enriched in basic and acidic residues.

The protein belongs to the ashwin family. As to quaternary structure, component of the tRNA-splicing ligase complex.

It localises to the nucleus. This chain is Ashwin, found in Mus musculus (Mouse).